The chain runs to 371 residues: Photosynthetic reaction center cytochrome c subunit (371 aa).

16 residues coordinate heme: Met-114, Cys-127, Cys-130, His-131, Met-153, His-167, Cys-178, Cys-181, His-182, Met-267, Cys-278, Cys-281, His-282, Cys-339, Cys-342, and His-343.

As to quaternary structure, component of the photosynthetic reaction center composed of protein subunits L (PufL), M (PufM), H (PuhA) and cytochrome C (PufC). The reaction center interacts with light-harvesting antenna complex LH1. In terms of processing, binds 4 heme groups per subunit.

It is found in the cellular chromatophore membrane. In terms of biological role, the reaction center of purple bacteria contains a tightly bound cytochrome molecule which re-reduces the photo oxidized primary electron donor. This chain is Photosynthetic reaction center cytochrome c subunit (pufC), found in Roseobacter denitrificans (strain ATCC 33942 / OCh 114) (Erythrobacter sp. (strain OCh 114)).